The primary structure comprises 93 residues: Translation initiation factor IF-1 (93 aa).

Residues 1–72 (MAKEELIQFE…EKGRLIFRHK (72 aa)) enclose the S1-like domain. Residues 70–93 (RHKDERPGGGPPRGAPPRGQFRRR) form a disordered region.

Belongs to the IF-1 family. As to quaternary structure, component of the 30S ribosomal translation pre-initiation complex which assembles on the 30S ribosome in the order IF-2 and IF-3, IF-1 and N-formylmethionyl-tRNA(fMet); mRNA recruitment can occur at any time during PIC assembly.

It is found in the cytoplasm. Functionally, one of the essential components for the initiation of protein synthesis. Stabilizes the binding of IF-2 and IF-3 on the 30S subunit to which N-formylmethionyl-tRNA(fMet) subsequently binds. Helps modulate mRNA selection, yielding the 30S pre-initiation complex (PIC). Upon addition of the 50S ribosomal subunit IF-1, IF-2 and IF-3 are released leaving the mature 70S translation initiation complex. The sequence is that of Translation initiation factor IF-1 from Rhodopseudomonas palustris (strain BisB18).